A 241-amino-acid chain; its full sequence is Glucosamine-6-phosphate deaminase (241 aa).

Asp-67 serves as the catalytic Proton acceptor; for enolization step. Residue Asn-136 is the For ring-opening step of the active site. His-138 acts as the Proton acceptor; for ring-opening step in catalysis. The active-site For ring-opening step is the Glu-143.

The protein belongs to the glucosamine/galactosamine-6-phosphate isomerase family. NagB subfamily.

The enzyme catalyses alpha-D-glucosamine 6-phosphate + H2O = beta-D-fructose 6-phosphate + NH4(+). The protein operates within amino-sugar metabolism; N-acetylneuraminate degradation; D-fructose 6-phosphate from N-acetylneuraminate: step 5/5. Catalyzes the reversible isomerization-deamination of glucosamine 6-phosphate (GlcN6P) to form fructose 6-phosphate (Fru6P) and ammonium ion. This chain is Glucosamine-6-phosphate deaminase, found in Clostridium acetobutylicum (strain ATCC 824 / DSM 792 / JCM 1419 / IAM 19013 / LMG 5710 / NBRC 13948 / NRRL B-527 / VKM B-1787 / 2291 / W).